Reading from the N-terminus, the 978-residue chain is Calsyntenin-1 (978 aa).

An N-terminal signal peptide occupies residues 1-26 (MTFHKTFGYGCIVLICFELLFAGVET). Residues 27-876 (SSENDDEYLT…SFIHKAEGSH (850 aa)) lie on the Extracellular side of the membrane. 2 consecutive Cadherin domains span residues 37 to 143 (QKEI…APTF) and 144 to 249 (LEPS…MPER). Residue Asn53 is glycosylated (N-linked (GlcNAc...) asparagine). Asn304, Asn486, Asn608, and Asn823 each carry an N-linked (GlcNAc...) asparagine glycan. The chain crosses the membrane as a helical span at residues 877 to 897 (VTMLIILVSVFLAVLLCGVSI). At 898–978 (ARLKNNQKYI…EWDNSNIFQQ (81 aa)) the chain is on the cytoplasmic side. A disordered region spans residues 937–958 (ADVTSDASSESENSESEDEEAL). The span at 948-957 (ENSESEDEEA) shows a compositional bias: acidic residues.

It belongs to the calsyntenin family.

It is found in the postsynaptic cell membrane. Postsynaptic adhesion molecule that binds to presynaptic neurexins to mediate both excitatory and inhibitory synapse formation. Promotes synapse development by acting as a cell adhesion molecule at the postsynaptic membrane, which associates with neurexin-alpha at the presynaptic membrane. The protein is Calsyntenin-1 (Cals) of Drosophila melanogaster (Fruit fly).